The chain runs to 208 residues: Uracil phosphoribosyltransferase (208 aa).

Residues R78, R103, and 130-138 (DPMLATGGS) each bind 5-phospho-alpha-D-ribose 1-diphosphate. Residues I193 and 198–200 (GDA) contribute to the uracil site. A 5-phospho-alpha-D-ribose 1-diphosphate-binding site is contributed by D199.

The protein belongs to the UPRTase family. The cofactor is Mg(2+).

The catalysed reaction is UMP + diphosphate = 5-phospho-alpha-D-ribose 1-diphosphate + uracil. It participates in pyrimidine metabolism; UMP biosynthesis via salvage pathway; UMP from uracil: step 1/1. Allosterically activated by GTP. Functionally, catalyzes the conversion of uracil and 5-phospho-alpha-D-ribose 1-diphosphate (PRPP) to UMP and diphosphate. This is Uracil phosphoribosyltransferase from Klebsiella pneumoniae (strain 342).